Consider the following 523-residue polypeptide: Cytochrome P450 52A3-B (523 aa).

The chain crosses the membrane as a helical span at residues 17-34 (WYTILFGAAFTYFLSIAL). Cys-471 provides a ligand contact to heme.

This sequence belongs to the cytochrome P450 family. Heme serves as cofactor.

The protein resides in the membrane. Functionally, together with an NADPH cytochrome P450 the enzyme system catalyzes the terminal hydroxylation as the first step in the assimilation of alkanes and fatty acids. The polypeptide is Cytochrome P450 52A3-B (CYP52A3-B) (Candida maltosa (Yeast)).